A 352-amino-acid chain; its full sequence is Protein-glutamate methylesterase/protein-glutamine glutaminase 1 (352 aa).

A Response regulatory domain is found at 5–122; it reads KVLVVDDSAF…SLDVLSVKEE (118 aa). Asp-56 bears the 4-aspartylphosphate mark. The region spanning 155-352 is the CheB-type methylesterase domain; the sequence is PDQDRKLNKL…EITEEVLSML (198 aa). Residues Ser-170, His-197, and Asp-297 contribute to the active site.

It belongs to the CheB family. Post-translationally, phosphorylated by CheA. Phosphorylation of the N-terminal regulatory domain activates the methylesterase activity.

The protein localises to the cytoplasm. The catalysed reaction is [protein]-L-glutamate 5-O-methyl ester + H2O = L-glutamyl-[protein] + methanol + H(+). It catalyses the reaction L-glutaminyl-[protein] + H2O = L-glutamyl-[protein] + NH4(+). Its function is as follows. Involved in chemotaxis. Part of a chemotaxis signal transduction system that modulates chemotaxis in response to various stimuli. Catalyzes the demethylation of specific methylglutamate residues introduced into the chemoreceptors (methyl-accepting chemotaxis proteins or MCP) by CheR. Also mediates the irreversible deamidation of specific glutamine residues to glutamic acid. This chain is Protein-glutamate methylesterase/protein-glutamine glutaminase 1, found in Syntrophomonas wolfei subsp. wolfei (strain DSM 2245B / Goettingen).